Reading from the N-terminus, the 59-residue chain is Large ribosomal subunit protein bL32 (59 aa).

The disordered stretch occupies residues Met1–Pro25.

The protein belongs to the bacterial ribosomal protein bL32 family.

The sequence is that of Large ribosomal subunit protein bL32 from Azoarcus sp. (strain BH72).